The chain runs to 241 residues: MFYSGLLTEGGRKETDMREAASLRQQRRMKQAVQFIHKDSADLLPLDGLKKLGSSKDMQPHNILQRRLMETNLSKLRSGPRVPWASKTNKLNQAKSEGLKKSEEDDMILVSCQCAGKDVKALVDTGCLYNLISLACVDRLGLKEHVKSHKHEGEKLSLPRHLKVVGQIEHLVITLGSLRLDCPAAVVDDNEKNLSLGLQTLRSLKCIINLDKHRLIMGKTDKEEIPFVETVSLNEDNTSEA.

In Homo sapiens (Human), this protein is Nuclear receptor-interacting protein 3 (NRIP3).